Consider the following 112-residue polypeptide: Photosystem II reaction center Psb28 protein (112 aa).

Belongs to the Psb28 family. Part of the photosystem II complex.

It localises to the cellular thylakoid membrane. The chain is Photosystem II reaction center Psb28 protein from Microcystis aeruginosa (strain NIES-843 / IAM M-2473).